The following is a 384-amino-acid chain: Galactokinase (384 aa).

35-38 (EHTD) contributes to the substrate binding site. Residues serine 69 and 125–131 (GAGLSSS) contribute to the ATP site. The Mg(2+) site is built by serine 131 and glutamate 163. Aspartate 175 functions as the Proton acceptor in the catalytic mechanism. Residue tyrosine 224 coordinates substrate.

The protein belongs to the GHMP kinase family. GalK subfamily.

It is found in the cytoplasm. It carries out the reaction alpha-D-galactose + ATP = alpha-D-galactose 1-phosphate + ADP + H(+). It functions in the pathway carbohydrate metabolism; galactose metabolism. Catalyzes the transfer of the gamma-phosphate of ATP to D-galactose to form alpha-D-galactose-1-phosphate (Gal-1-P). This chain is Galactokinase, found in Aliivibrio fischeri (strain ATCC 700601 / ES114) (Vibrio fischeri).